A 453-amino-acid polypeptide reads, in one-letter code: Aspartate aminotransferase, chloroplastic (453 aa).

The N-terminal 44 residues, 1–44 (MASLMLSLGSTSLLPREINKDKLKLGTSASNPFLKAKSFSRVTM), are a transit peptide targeting the chloroplast. L-aspartate contacts are provided by Gly85, Trp181, and Asn234. Lys298 is subject to N6-(pyridoxal phosphate)lysine. L-aspartate is bound at residue Arg427.

It belongs to the class-I pyridoxal-phosphate-dependent aminotransferase family. As to quaternary structure, homodimer. Pyridoxal 5'-phosphate is required as a cofactor.

It is found in the plastid. Its subcellular location is the chloroplast. It localises to the amyloplast. It carries out the reaction L-aspartate + 2-oxoglutarate = oxaloacetate + L-glutamate. Its function is as follows. Amino acid aminotransferase important for the metabolism of amino acids and Krebs-cycle related organic acids. No activity with D-Asp or D-Ala as amino donors. In plants, it is involved in nitrogen metabolism and in aspects of carbon and energy metabolism. The polypeptide is Aspartate aminotransferase, chloroplastic (ASP5) (Arabidopsis thaliana (Mouse-ear cress)).